We begin with the raw amino-acid sequence, 619 residues long: Eukaryotic translation initiation factor 3 subunit D (619 aa).

Residues 99–160 (QKQPHQRGRF…KWGARPPPKI (62 aa)) form a disordered region. The segment covering 100-121 (KQPHQRGRFRGNLRNQRGRGRG) has biased composition (basic residues). Residues 288-302 (EFDLLTVNETAIEPP) are RNA gate. The interval 588–619 (TPAATETVATATTEATTPTTATKTTAPAAAQK) is disordered.

It belongs to the eIF-3 subunit D family. As to quaternary structure, component of the eukaryotic translation initiation factor 3 (eIF-3) complex.

It is found in the cytoplasm. MRNA cap-binding component of the eukaryotic translation initiation factor 3 (eIF-3) complex, which is involved in protein synthesis of a specialized repertoire of mRNAs and, together with other initiation factors, stimulates binding of mRNA and methionyl-tRNAi to the 40S ribosome. The eIF-3 complex specifically targets and initiates translation of a subset of mRNAs involved in cell proliferation. In the eIF-3 complex, eif3d specifically recognizes and binds the 7-methylguanosine cap of a subset of mRNAs. The sequence is that of Eukaryotic translation initiation factor 3 subunit D from Aedes aegypti (Yellowfever mosquito).